We begin with the raw amino-acid sequence, 334 residues long: GTP 3',8-cyclase (334 aa).

Positions 8–244 (RYGRPLRDLR…GEVAQRHAFA (237 aa)) constitute a Radical SAM core domain. Arg-17 contributes to the GTP binding site. Positions 24 and 28 each coordinate [4Fe-4S] cluster. Tyr-30 lines the S-adenosyl-L-methionine pocket. A [4Fe-4S] cluster-binding site is contributed by Cys-31. Residue Arg-70 coordinates GTP. Gly-74 contacts S-adenosyl-L-methionine. Residue Thr-101 participates in GTP binding. Ser-125 serves as a coordination point for S-adenosyl-L-methionine. Residue Lys-163 coordinates GTP. Residue Met-197 participates in S-adenosyl-L-methionine binding. The [4Fe-4S] cluster site is built by Cys-261 and Cys-264. 266–268 (RAR) serves as a coordination point for GTP. Position 278 (Cys-278) interacts with [4Fe-4S] cluster.

This sequence belongs to the radical SAM superfamily. MoaA family. As to quaternary structure, monomer and homodimer. [4Fe-4S] cluster serves as cofactor.

It carries out the reaction GTP + AH2 + S-adenosyl-L-methionine = (8S)-3',8-cyclo-7,8-dihydroguanosine 5'-triphosphate + 5'-deoxyadenosine + L-methionine + A + H(+). It participates in cofactor biosynthesis; molybdopterin biosynthesis. Functionally, catalyzes the cyclization of GTP to (8S)-3',8-cyclo-7,8-dihydroguanosine 5'-triphosphate. This Xanthomonas axonopodis pv. citri (strain 306) protein is GTP 3',8-cyclase.